Here is a 566-residue protein sequence, read N- to C-terminus: E3 ubiquitin-protein ligase Rnf220 (566 aa).

Lys277 is covalently cross-linked (Glycyl lysine isopeptide (Lys-Gly) (interchain with G-Cter in SUMO2)). The interval 277–300 is disordered; sequence KREGDSPTASPHSSATEDLHHSDR. The span at 291-300 shows a compositional bias: basic and acidic residues; sequence ATEDLHHSDR. Ser390 bears the Phosphoserine mark. Residues 485–513 adopt a coiled-coil conformation; sequence EESAVTTFEALKARVRELERQLSRGDRYK. The segment at 514–522 is required for targeting to the cytoplasm; sequence CLICMDSYS. The RING-type zinc-finger motif lies at 514–553; it reads CLICMDSYSMPLTSIQCWHVHCEECWLRTLGAKKLCPQCN.

As to quaternary structure, interacts with SIN3B. Interacts with CTNNB1 (via Armadillo repeats 2-8). Interacts with USP7 (via MATH domain). Auto-ubiquitinated; leads to proteasomal degradation. In terms of tissue distribution, in the brain, expressed in the hippocampus, telenecephalon and cerebellum. No expression in astro glial cells or in neural progenitor cells.

The protein localises to the cytoplasm. Its subcellular location is the nucleus. It catalyses the reaction S-ubiquitinyl-[E2 ubiquitin-conjugating enzyme]-L-cysteine + [acceptor protein]-L-lysine = [E2 ubiquitin-conjugating enzyme]-L-cysteine + N(6)-ubiquitinyl-[acceptor protein]-L-lysine.. It participates in protein modification; protein ubiquitination. Functionally, E3 ubiquitin-protein ligase that promotes the ubiquitination and proteasomal degradation of SIN3B. Independently of its E3 ligase activity, acts as a CTNNB1 stabilizer through USP7-mediated deubiquitination of CTNNB1 and promotes Wnt signaling. Plays a critical role in the regulation of nuclear lamina. The chain is E3 ubiquitin-protein ligase Rnf220 (Rnf220) from Mus musculus (Mouse).